We begin with the raw amino-acid sequence, 113 residues long: Defense protein 2 (113 aa).

Belongs to the attacin/sarcotoxin-2 family.

Its subcellular location is the secreted. Has antibacterial activity against both Gram-positive and Gram-negative bacteria. The protein is Defense protein 2 of Lonomia obliqua (Moth).